The primary structure comprises 421 residues: Glucose-1-phosphate adenylyltransferase (421 aa).

Residues Tyr-108, Gly-173, 188–189 (EK), and Ser-206 contribute to the alpha-D-glucose 1-phosphate site.

This sequence belongs to the bacterial/plant glucose-1-phosphate adenylyltransferase family. Homotetramer.

The catalysed reaction is alpha-D-glucose 1-phosphate + ATP + H(+) = ADP-alpha-D-glucose + diphosphate. It functions in the pathway glycan biosynthesis; glycogen biosynthesis. Functionally, involved in the biosynthesis of ADP-glucose, a building block required for the elongation reactions to produce glycogen. Catalyzes the reaction between ATP and alpha-D-glucose 1-phosphate (G1P) to produce pyrophosphate and ADP-Glc. This chain is Glucose-1-phosphate adenylyltransferase, found in Mesorhizobium japonicum (strain LMG 29417 / CECT 9101 / MAFF 303099) (Mesorhizobium loti (strain MAFF 303099)).